A 663-amino-acid polypeptide reads, in one-letter code: Cytochrome bo(3) ubiquinol oxidase subunit 1 (663 aa).

Residues 1–16 (MFGKLSLDAVPFHEPI) are Periplasmic-facing. The helical transmembrane segment at 17 to 35 (VMVTIAGIILGGLALVGLI) threads the bilayer. The Cytoplasmic segment spans residues 36–52 (TYFGKWTYLWKEWLTSV). The helical transmembrane segment at 53–80 (DHKRLGIMYIIVAIVMLLRGFADAIMMR) threads the bilayer. Residues R71 and D75 each coordinate ubiquinone-8. The Periplasmic segment spans residues 81–95 (SQQALASAGEAGFLP). The helical transmembrane segment at 96–132 (PHHYDQIFTAHGVIMIFFVAMPFVIGLMNLVVPLQIG) threads the bilayer. H98 is a ubiquinone-8 binding site. Heme b is bound at residue H106. Over 133–137 (ARDVA) the chain is Cytoplasmic. The helical transmembrane segment at 138-161 (FPFLNNLSFWFTVVGVILVNVSLG) threads the bilayer. The Periplasmic portion of the chain corresponds to 162–184 (VGEFAQTGWLAYPPLSGIEYSPG). W170 contributes to the heme b binding site. Residues 185-215 (VGVDYWIWSLQLSGIGTTLTGINFFVTILKM) form a helical membrane-spanning segment. Over 216–224 (RAPGMTMFK) the chain is Cytoplasmic. The chain crosses the membrane as a helical span at residues 225-260 (MPVFTWASLCANVLIIASFPILTVTVALLTLDRYLG). Topologically, residues 261-270 (THFFTNDMGG) are periplasmic. Residues 271 to 307 (NMMMYINLIWAWGHPEVYILILPVFGVFSEIAATFSR) form a helical membrane-spanning segment. Cu(2+) is bound at residue H284. Positions 284–288 (HPEVY) form a cross-link, 1'-histidyl-3'-tyrosine (His-Tyr). Residue Y288 participates in Fe(II)-heme o binding. Residues 308–311 (KRLF) are Cytoplasmic-facing. The helical transmembrane segment at 312 to 326 (GYTSLVWATVCITVL) threads the bilayer. Topologically, residues 327–340 (SFIVWLHHFFTMGA) are periplasmic. The Cu(2+) site is built by H333 and H334. Residues 341-369 (GANVNAFFGITTMIIAIPTGVKIFNWLFT) form a helical membrane-spanning segment. Residues 370–377 (MYQGRIVF) lie on the Cytoplasmic side of the membrane. Residues 378–409 (HSAMLWTIGFIVTFSVGGMTGVLLAVPGADFV) traverse the membrane as a helical segment. At 410–412 (LHN) the chain is on the periplasmic side. The Fe(II)-heme o site is built by H411 and H419. Residues 413 to 445 (SLFLIAHFHNVIIGGVVFGCFAGMTYWWPKAFG) form a helical membrane-spanning segment. H421 contributes to the heme b binding site. Residues 446–448 (FKL) lie on the Cytoplasmic side of the membrane. Residues 449–477 (NETWGKRAFWFWIIGFFVAFMPLYALGFM) form a helical membrane-spanning segment. Topologically, residues 478-489 (GMTRRLSQQIDP) are periplasmic. Positions 481 and 482 each coordinate heme b. A helical transmembrane segment spans residues 490–521 (QFHTMLMIAASGAVLIALGILCLVIQMYVSIR). The Cytoplasmic segment spans residues 522-587 (DRDQNRDLTG…DHYEEIHMPK (66 aa)). Residues 588–606 (NSGAGIVIAAFSTIFGFAM) traverse the membrane as a helical segment. The Periplasmic portion of the chain corresponds to 607-613 (IWHIWWL). The chain crosses the membrane as a helical span at residues 614-632 (AIVGFAGMIITWIVKSFDE). Over 633–663 (DVDYYVPVAEIEKLENQHFDEITKAGLKNGN) the chain is Cytoplasmic.

Belongs to the heme-copper respiratory oxidase family. The cytochrome bo(3) ubiquinol oxidase complex is a heterooctamer of two A chains, two B chains, two C chains and two D chains. Cu(2+) is required as a cofactor. Heme b serves as cofactor. Requires Fe(II)-heme o as cofactor.

It is found in the cell inner membrane. It carries out the reaction 2 a ubiquinol + O2 + n H(+)(in) = 2 a ubiquinone + 2 H2O + n H(+)(out). Its function is as follows. Cytochrome bo(3) ubiquinol oxidase is the terminal enzyme in the aerobic respiratory chain of E.coli that predominates when cells are grown at high aeration. Catalyzes the four-electron reduction of O2 to water, using a ubiquinol as a membrane soluble electron donor for molecular oxygen reduction; ubiquinol-8 is the natural substrate for E.coli. Has proton pump activity across the membrane in addition to electron transfer, pumping 2 protons/electron and generating a proton motive force. All the redox centers of this enzyme complex are located within the largest subunit, subunit I. Protons are probably pumped via D- and K- channels found in this subunit. The protein is Cytochrome bo(3) ubiquinol oxidase subunit 1 (cyoB) of Escherichia coli O157:H7.